The primary structure comprises 290 residues: MRMAVSMEDVKKLREMTGAGMLDCKKALEEAGGDIEKAKEILRVKGLAKAEKKAGRETKEGLIYVIVSEDRKKGAMIELNCETDFVARNEEFRKLAERITRHILEKDENKNKSGEGSEILSQELYDEPGKTVETLIKEAIAKIGENIRLSRYCRYDTEDYLHSYVHGGGRIGVLLDFKAPELNDQVLRLVQDVAMQIAAMRPEYVRIEDIPQEVLERERRILREQALQEGKPEHIVDKIVEGKLKKFYQEKVLLEQPFIKEEKKQVKDVIKESGLNVEIKRFCRFELGGL.

The tract at residues 83–86 (TDFV) is involved in Mg(2+) ion dislocation from EF-Tu.

It belongs to the EF-Ts family.

The protein localises to the cytoplasm. Associates with the EF-Tu.GDP complex and induces the exchange of GDP to GTP. It remains bound to the aminoacyl-tRNA.EF-Tu.GTP complex up to the GTP hydrolysis stage on the ribosome. This chain is Elongation factor Ts (tsf), found in Aquifex aeolicus (strain VF5).